The primary structure comprises 354 residues: 5,10-methenyltetrahydromethanopterin hydrogenase (354 aa).

It belongs to the HMD family.

It catalyses the reaction 5,10-methenyl-5,6,7,8-tetrahydromethanopterin + H2 = 5,10-methylenetetrahydromethanopterin + H(+). Its pathway is one-carbon metabolism; methanogenesis from CO(2); 5,10-methylene-5,6,7,8-tetrahydromethanopterin from 5,10-methenyl-5,6,7,8-tetrahydromethanopterin (hydrogen route): step 1/1. Its function is as follows. Catalyzes the reversible reduction of methenyl-H(4)MPT(+) to methylene-H(4)MPT. This chain is 5,10-methenyltetrahydromethanopterin hydrogenase, found in Methanococcus vannielii (strain ATCC 35089 / DSM 1224 / JCM 13029 / OCM 148 / SB).